Here is a 336-residue protein sequence, read N- to C-terminus: Ferrochelatase (336 aa).

2 residues coordinate Fe cation: H206 and E287.

Belongs to the ferrochelatase family.

The protein resides in the cytoplasm. The enzyme catalyses heme b + 2 H(+) = protoporphyrin IX + Fe(2+). The protein operates within porphyrin-containing compound metabolism; protoheme biosynthesis; protoheme from protoporphyrin-IX: step 1/1. Functionally, catalyzes the ferrous insertion into protoporphyrin IX. The protein is Ferrochelatase of Neisseria meningitidis serogroup A / serotype 4A (strain DSM 15465 / Z2491).